The primary structure comprises 329 residues: Bifunctional muramidase/DL-endopeptidase CwlT (329 aa).

Positions 1–29 (MISKKVVLPLVFSAPFIFFFVLCIVVVMT) are cleaved as a signal peptide. Residues 59 to 192 (RFRAVFEKYA…SYVDHVMRYV (134 aa)) form a muramidase region. Residues 206-329 (MDFYETVMKE…DHLVSFGRIK (124 aa)) form the NlpC/P60 domain. Catalysis depends on Cys-237, which acts as the Nucleophile. His-290 (proton acceptor) is an active-site residue. The active site involves Asn-302.

The protein belongs to the peptidase C40 family.

The protein localises to the secreted. The catalysed reaction is Hydrolysis of (1-&gt;4)-beta-linkages between N-acetylmuramic acid and N-acetyl-D-glucosamine residues in a peptidoglycan and between N-acetyl-D-glucosamine residues in chitodextrins.. Its function is as follows. Exhibits both muramidase and DL-endopeptidase activities. The N-terminal region acts as a N-acetylmuramidase, which cleaves the bond between N-acetylmuramic acid and N-acetyl-D-glucosamine (MurNAc-GlcNAc) in peptidoglycan. The C-terminal region acts as a DL-endopeptidase that cleaves the bond between D-gamma-glutamate and meso-diaminopimelic acid. Cannot degrade purified B.anthracis peptidoglycan, which differ from those of B.subtilis. CwlT is required for ICEBs1 conjugation: the muramidase activity is essential, whereas the peptidase activity is partially dispensable for transfer of ICEBs1. In Bacillus subtilis (strain 168), this protein is Bifunctional muramidase/DL-endopeptidase CwlT.